We begin with the raw amino-acid sequence, 590 residues long: L-fucose isomerase (590 aa).

Catalysis depends on proton acceptor residues E337 and D361. Residues E337, D361, and H528 each coordinate Mn(2+).

The protein belongs to the L-fucose isomerase family. It depends on Mn(2+) as a cofactor.

It is found in the cytoplasm. It carries out the reaction L-fucose = L-fuculose. It functions in the pathway carbohydrate degradation; L-fucose degradation; L-lactaldehyde and glycerone phosphate from L-fucose: step 1/3. In terms of biological role, converts the aldose L-fucose into the corresponding ketose L-fuculose. In Bacteroides fragilis (strain YCH46), this protein is L-fucose isomerase.